Reading from the N-terminus, the 428-residue chain is Enolase (428 aa).

Q163 is a binding site for (2R)-2-phosphoglycerate. E205 serves as the catalytic Proton donor. The Mg(2+) site is built by D242, E286, and D313. The (2R)-2-phosphoglycerate site is built by K338, R367, S368, and K389. The active-site Proton acceptor is K338.

The protein belongs to the enolase family. Mg(2+) serves as cofactor.

Its subcellular location is the cytoplasm. It localises to the secreted. The protein resides in the cell surface. It carries out the reaction (2R)-2-phosphoglycerate = phosphoenolpyruvate + H2O. It functions in the pathway carbohydrate degradation; glycolysis; pyruvate from D-glyceraldehyde 3-phosphate: step 4/5. In terms of biological role, catalyzes the reversible conversion of 2-phosphoglycerate (2-PG) into phosphoenolpyruvate (PEP). It is essential for the degradation of carbohydrates via glycolysis. The polypeptide is Enolase (Acidovorax ebreus (strain TPSY) (Diaphorobacter sp. (strain TPSY))).